The following is a 289-amino-acid chain: 2-dehydro-3-deoxyphosphooctonate aldolase (289 aa).

This sequence belongs to the KdsA family.

It localises to the cytoplasm. It catalyses the reaction D-arabinose 5-phosphate + phosphoenolpyruvate + H2O = 3-deoxy-alpha-D-manno-2-octulosonate-8-phosphate + phosphate. The protein operates within carbohydrate biosynthesis; 3-deoxy-D-manno-octulosonate biosynthesis; 3-deoxy-D-manno-octulosonate from D-ribulose 5-phosphate: step 2/3. Its pathway is bacterial outer membrane biogenesis; lipopolysaccharide biosynthesis. The protein is 2-dehydro-3-deoxyphosphooctonate aldolase of Cupriavidus taiwanensis (strain DSM 17343 / BCRC 17206 / CCUG 44338 / CIP 107171 / LMG 19424 / R1) (Ralstonia taiwanensis (strain LMG 19424)).